Here is a 634-residue protein sequence, read N- to C-terminus: Bacteriophytochrome (634 aa).

Biliverdin IXalpha is bound at residue C13. A PAS 1 domain is found at 13–118 (CAREPIHIPG…YPQQWLVEME (106 aa)). The interval 13-514 (CAREPIHIPG…ELMERKRFQQ (502 aa)) is photosensory core domain. Positions 151–305 (RVAKGLRSLI…VTDAVARTLA (155 aa)) constitute a GAF domain. The interval 325–508 (TVREKLITDF…SLRVLIELME (184 aa)) is phytochrome-specific (PHY). The interval 452–480 (WAGNPQLAKLEDIPNSRLSPRKSFDLWQQ) is tongue domain. The region spanning 515-590 (DFTLLEASLS…ELLQDALRNG (76 aa)) is the PAS 2 domain. The PAS9, output module, not required to bind biliverdin IX-alpha, required for dimerization stretch occupies residues 515–634 (DFTLLEASLS…HWLLQLRDPE (120 aa)).

The protein in the N-terminal section; belongs to the phytochrome family. In terms of assembly, forms head-to-head homodimers. In terms of processing, contains one covalently linked biliverdin IX-alpha chromophore; present in the crystal structure as a mixture of Pr and Meta-R configurations.

Its function is as follows. Photoreceptor which exists in two forms that are reversibly interconvertible by light: far-red light (733 nm) converts protein to the red-absorbing (Pr) form, while red light (630 nm) partly converts the protein to the far-red-absorbing (Pfr) form. Regulates virulence of X.campestris pv. campestris on its host plants, perhaps by fine-tuning expression to ambient light levels and/or spatial cues. The Pr form may sense light and partially inhibit virulence; in the dark (Pfr form) biofilm and xanathan production rise and bacteria are more virulent. Strains overexpressing this protein have significantly decreased amounts of extracellular beta-1,4-endoglucanase, produce less xanthin and have decreased transcription of genes involved in virulence such as endoglucanases, type 2 secretion systems, xanthan production and flagellar-dependent motility. The chain is Bacteriophytochrome (bphP) from Xanthomonas campestris pv. campestris (strain 8004).